The sequence spans 726 residues: Penicillin-binding protein 1A (726 aa).

The Cytoplasmic segment spans residues Met-1–Lys-3. A helical; Signal-anchor for type II membrane protein membrane pass occupies residues Leu-4–Ile-24. Topologically, residues Pro-25–Arg-726 are periplasmic. Residues Ser-45 to Glu-213 are transglycosylase. The active-site Proton donor; for transglycosylase activity is the Glu-83. The tract at residues Lys-379–Asp-662 is transpeptidase. The active-site Acyl-ester intermediate; for transpeptidase activity is Ser-432.

This sequence in the N-terminal section; belongs to the glycosyltransferase 51 family. In the C-terminal section; belongs to the transpeptidase family.

It localises to the cell inner membrane. It carries out the reaction [GlcNAc-(1-&gt;4)-Mur2Ac(oyl-L-Ala-gamma-D-Glu-L-Lys-D-Ala-D-Ala)](n)-di-trans,octa-cis-undecaprenyl diphosphate + beta-D-GlcNAc-(1-&gt;4)-Mur2Ac(oyl-L-Ala-gamma-D-Glu-L-Lys-D-Ala-D-Ala)-di-trans,octa-cis-undecaprenyl diphosphate = [GlcNAc-(1-&gt;4)-Mur2Ac(oyl-L-Ala-gamma-D-Glu-L-Lys-D-Ala-D-Ala)](n+1)-di-trans,octa-cis-undecaprenyl diphosphate + di-trans,octa-cis-undecaprenyl diphosphate + H(+). It catalyses the reaction Preferential cleavage: (Ac)2-L-Lys-D-Ala-|-D-Ala. Also transpeptidation of peptidyl-alanyl moieties that are N-acyl substituents of D-alanine.. Its pathway is cell wall biogenesis; peptidoglycan biosynthesis. In Aquifex aeolicus (strain VF5), this protein is Penicillin-binding protein 1A (mrcA).